Consider the following 177-residue polypeptide: B-phycoerythrin beta chain (177 aa).

Residues Lys28, Asn35, Asp39, Cys50, Asp54, Cys61, Asn72, 77 to 78 (RR), Cys82, Arg129, 147 to 148 (SQ), 154 to 158 (PQGDC), and Cys158 each bind (2R,3E)-phycoerythrobilin. At Asn72 the chain carries N4-methylasparagine.

This sequence belongs to the phycobiliprotein family. Heterotetramer of 2 different alpha chains and 2 identical beta chains. The subunit composition could comprise any combination of 2 out of 4 different alpha units with an invariant beta unit. In terms of processing, contains three covalently linked phycoerythrobilin chromophores.

Its subcellular location is the plastid. It localises to the chloroplast thylakoid membrane. In terms of biological role, light-harvesting photosynthetic tetrapyrrole chromophore-protein from the phycobiliprotein complex. The sequence is that of B-phycoerythrin beta chain (cpeB) from Rhodomonas sp. (strain CS 24) (Chroomonas sp. (strain CS24)).